A 552-amino-acid polypeptide reads, in one-letter code: Putative pentatricopeptide repeat-containing protein At1g64310 (552 aa).

PPR repeat units follow at residues 39 to 69 (DPYF…FPER), 70 to 104 (SVFL…DTRP), 105 to 139 (DNFT…GLGF), 140 to 170 (DQIC…IPDP), 171 to 205 (DLAL…GHQP), 206 to 240 (NCYT…NLDS), 241 to 271 (HSYV…ISEP), 272 to 306 (DLVA…GKKP), 307 to 341 (DCVL…GLEL), 342 to 372 (DIKV…IPEK), 373 to 407 (NIVS…GLIP), 408 to 438 (DEIT…MKSE), and 444 to 474 (QTEH…LQKP). Residues 479–552 (ILGALLSCCE…GGKLPGISWF (74 aa)) are type E motif; degenerate.

It belongs to the PPR family. PCMP-E subfamily.

This is Putative pentatricopeptide repeat-containing protein At1g64310 (PCMP-E65) from Arabidopsis thaliana (Mouse-ear cress).